We begin with the raw amino-acid sequence, 70 residues long: Small ribosomal subunit protein bS21 (70 aa).

Positions 43-70 (TERKRKAAAAVKRQHKRLRSLTLPPKLY) are disordered. Basic residues predominate over residues 45-61 (RKRKAAAAVKRQHKRLR).

The protein belongs to the bacterial ribosomal protein bS21 family.

This Dechloromonas aromatica (strain RCB) protein is Small ribosomal subunit protein bS21.